The sequence spans 120 residues: Large ribosomal subunit protein bL20 (120 aa).

Belongs to the bacterial ribosomal protein bL20 family.

Its function is as follows. Binds directly to 23S ribosomal RNA and is necessary for the in vitro assembly process of the 50S ribosomal subunit. It is not involved in the protein synthesizing functions of that subunit. This chain is Large ribosomal subunit protein bL20, found in Ligilactobacillus salivarius (strain UCC118) (Lactobacillus salivarius).